Consider the following 459-residue polypeptide: Putrescine aminotransferase (459 aa).

Pyridoxal 5'-phosphate-binding positions include 150–151 (GT) and glutamine 274. Lysine 300 carries the post-translational modification N6-(pyridoxal phosphate)lysine. Threonine 332 contributes to the pyridoxal 5'-phosphate binding site.

The protein belongs to the class-III pyridoxal-phosphate-dependent aminotransferase family. Putrescine aminotransferase subfamily. Pyridoxal 5'-phosphate serves as cofactor.

The enzyme catalyses an alkane-alpha,omega-diamine + 2-oxoglutarate = an omega-aminoaldehyde + L-glutamate. It carries out the reaction putrescine + 2-oxoglutarate = 1-pyrroline + L-glutamate + H2O. It catalyses the reaction cadaverine + 2-oxoglutarate = 5-aminopentanal + L-glutamate. Its pathway is amine and polyamine degradation; putrescine degradation; 4-aminobutanal from putrescine (transaminase route): step 1/1. Its function is as follows. Catalyzes the aminotransferase reaction from putrescine to 2-oxoglutarate, leading to glutamate and 4-aminobutanal, which spontaneously cyclizes to form 1-pyrroline. This is the first step in one of two pathways for putrescine degradation, where putrescine is converted into 4-aminobutanoate (gamma-aminobutyrate or GABA) via 4-aminobutanal. Also functions as a cadaverine transaminase in a a L-lysine degradation pathway to succinate that proceeds via cadaverine, glutarate and L-2-hydroxyglutarate. This is Putrescine aminotransferase from Shigella flexneri serotype 5b (strain 8401).